The following is a 1342-amino-acid chain: DNA-directed RNA polymerase subunit beta (1342 aa).

It belongs to the RNA polymerase beta chain family. The RNAP catalytic core consists of 2 alpha, 1 beta, 1 beta' and 1 omega subunit. When a sigma factor is associated with the core the holoenzyme is formed, which can initiate transcription.

It carries out the reaction RNA(n) + a ribonucleoside 5'-triphosphate = RNA(n+1) + diphosphate. In terms of biological role, DNA-dependent RNA polymerase catalyzes the transcription of DNA into RNA using the four ribonucleoside triphosphates as substrates. This chain is DNA-directed RNA polymerase subunit beta, found in Salmonella gallinarum (strain 287/91 / NCTC 13346).